The chain runs to 167 residues: Ribosome maturation factor RimP (167 aa).

Belongs to the RimP family.

Its subcellular location is the cytoplasm. Functionally, required for maturation of 30S ribosomal subunits. In Streptomyces griseus subsp. griseus (strain JCM 4626 / CBS 651.72 / NBRC 13350 / KCC S-0626 / ISP 5235), this protein is Ribosome maturation factor RimP.